Here is a 551-residue protein sequence, read N- to C-terminus: Gliomedin (551 aa).

Topologically, residues methionine 1–arginine 17 are cytoplasmic. A helical; Signal-anchor for type II membrane protein transmembrane segment spans residues glycine 18–cysteine 39. At glutamine 40 to glutamine 551 the chain is on the extracellular side. Residues leucine 72–glutamate 107 form a disordered region. The segment covering alanine 79–alanine 90 has biased composition (low complexity). An N-linked (GlcNAc...) asparagine glycan is attached at asparagine 130. Collagen-like domains are found at residues leucine 137–lysine 195 and glycine 196–valine 222. Residues glycine 139–aspartate 282 are disordered. Basic and acidic residues-rich tracts occupy residues glutamate 191–glutamate 200 and lysine 213–valine 222. The segment covering proline 237–proline 253 has biased composition (pro residues). The region spanning glutamine 299 to serine 546 is the Olfactomedin-like domain. Residues asparagine 329, asparagine 357, asparagine 378, and asparagine 464 are each glycosylated (N-linked (GlcNAc...) asparagine).

In terms of assembly, homotrimer (via collagen-like domains). Interacts with NRCAM and NFASC/neurofascin. Interaction with glial NRCAM enhances interaction with axonal NFASC. Interacts with MYOC. Post-translationally, N-glycosylated. Proteolytic processing by a furin-like protease causes shedding of the ectodomain. Further cleavage by BMP1 releases the olfactomedin-like domain. Specifically expressed in spinal cord, brain, placenta and sciatic nerve. More abundant in peripheral than central nervous system.

The protein resides in the cell membrane. The protein localises to the cell projection. It is found in the axon. It localises to the secreted. Its subcellular location is the extracellular space. The protein resides in the extracellular matrix. Functionally, ligand for NRCAM and NFASC/neurofascin that plays a role in the formation and maintenance of the nodes of Ranvier on myelinated axons. Mediates interaction between Schwann cell microvilli and axons via its interactions with NRCAM and NFASC. Nodes of Ranvier contain clustered sodium channels that are crucial for the saltatory propagation of action potentials along myelinated axons. During development, nodes of Ranvier are formed by the fusion of two heminodes. Required for normal clustering of sodium channels at heminodes; not required for the formation of mature nodes with normal sodium channel clusters. Required, together with NRCAM, for maintaining NFASC and sodium channel clusters at mature nodes of Ranvier. The protein is Gliomedin (GLDN) of Homo sapiens (Human).